The sequence spans 382 residues: MASSANALRLGLRTCSRPTQTSNLRIAALQRRALSATATRCEGVPVPKREDDAKLEFTRPYNPGEFLSEKLRSDDLQDWERERYERALTSWEQTPDDLKRGWSTMIRDIEQAAAPLRRVVMPRRSTFWYEEEKDTDLITNEDGEDDFHENDIMSLGHGKLEEHREFREYARIAVWEMPLLSKYAKPFVPPTSEEVLRFRYTTYMGEFHPADRKVVVEFCPKDLRDLSEVQQRKLMKLAGPRYNPEKDIIKMSCEKFEHQAQNKRYLGDLIEKMIAAAKDPKDTFEDIPLDTRHHTFTKKISFPKEWLLTEERKKELEAARQQALLKDAEKVVQGALVDGADVVKQYLESGAAEALHAVPVMAGRGGKALPGGKGGKMQRSKR.

Over residues 363–375 (GRGGKALPGGKGG) the composition is skewed to gly residues. A disordered region spans residues 363 to 382 (GRGGKALPGGKGGKMQRSKR).

This sequence belongs to the mitochondrion-specific ribosomal protein mS35 family. In terms of assembly, component of the mitochondrial small ribosomal subunit (mt-SSU). Mature N.crassa 74S mitochondrial ribosomes consist of a small (37S) and a large (54S) subunit. The 37S small subunit contains a 16S ribosomal RNA (16S mt-rRNA) and 32 different proteins. The 54S large subunit contains a 23S rRNA (23S mt-rRNA) and 42 different proteins.

The protein resides in the mitochondrion. Its function is as follows. Component of the mitochondrial ribosome (mitoribosome), a dedicated translation machinery responsible for the synthesis of mitochondrial genome-encoded proteins, including at least some of the essential transmembrane subunits of the mitochondrial respiratory chain. The mitoribosomes are attached to the mitochondrial inner membrane and translation products are cotranslationally integrated into the membrane. In Neurospora crassa (strain ATCC 24698 / 74-OR23-1A / CBS 708.71 / DSM 1257 / FGSC 987), this protein is Small ribosomal subunit protein mS35 (rsm24).